The sequence spans 750 residues: uncharacterized protein (750 aa).

This is an uncharacterized protein from Escherichia coli (strain K12).